The sequence spans 469 residues: Neuraminidase (469 aa).

The Intravirion segment spans residues 1–9 (MNPNQKIIT). A helical membrane pass occupies residues 10-30 (IGSVSLTIATICFLMQIAILV). The interval 11-33 (GSVSLTIATICFLMQIAILVTTV) is involved in apical transport and lipid raft association. The Virion surface segment spans residues 31–469 (TTVTLHFKQY…DGADINLMPI (439 aa)). The interval 36–88 (HFKQYECDSPANKQVMPCEPIIIERNITEIVYLTNTTIEKEICPKLVEYRNWS) is hypervariable stalk region. Asparagine 61, asparagine 70, and asparagine 86 each carry an N-linked (GlcNAc...) asparagine; by host glycan. The tract at residues 91–469 (QCKITGFAPF…DGADINLMPI (379 aa)) is head of neuraminidase. Cystine bridges form between cysteine 92-cysteine 417, cysteine 124-cysteine 129, cysteine 183-cysteine 230, cysteine 232-cysteine 237, cysteine 278-cysteine 291, cysteine 280-cysteine 289, cysteine 318-cysteine 337, and cysteine 421-cysteine 447. Position 118 (arginine 118) interacts with substrate. A glycan (N-linked (GlcNAc...) asparagine; by host) is linked at asparagine 146. Aspartate 151 functions as the Proton donor/acceptor in the catalytic mechanism. Residue arginine 152 coordinates substrate. Residues asparagine 200 and asparagine 234 are each glycosylated (N-linked (GlcNAc...) asparagine; by host). 276 to 277 (EE) lines the substrate pocket. Residue arginine 292 participates in substrate binding. Residues aspartate 293, glycine 297, and aspartate 324 each contribute to the Ca(2+) site. Residue arginine 371 coordinates substrate. A glycan (N-linked (GlcNAc...) asparagine; by host) is linked at asparagine 402. Tyrosine 406 functions as the Nucleophile in the catalytic mechanism.

This sequence belongs to the glycosyl hydrolase 34 family. Homotetramer. Requires Ca(2+) as cofactor. N-glycosylated.

Its subcellular location is the virion membrane. The protein localises to the host apical cell membrane. The catalysed reaction is Hydrolysis of alpha-(2-&gt;3)-, alpha-(2-&gt;6)-, alpha-(2-&gt;8)- glycosidic linkages of terminal sialic acid residues in oligosaccharides, glycoproteins, glycolipids, colominic acid and synthetic substrates.. Its activity is regulated as follows. Inhibited by the neuraminidase inhibitors zanamivir (Relenza) and oseltamivir (Tamiflu). These drugs interfere with the release of progeny virus from infected cells and are effective against all influenza strains. Resistance to neuraminidase inhibitors is quite rare. In terms of biological role, catalyzes the removal of terminal sialic acid residues from viral and cellular glycoconjugates. Cleaves off the terminal sialic acids on the glycosylated HA during virus budding to facilitate virus release. Additionally helps virus spread through the circulation by further removing sialic acids from the cell surface. These cleavages prevent self-aggregation and ensure the efficient spread of the progeny virus from cell to cell. Otherwise, infection would be limited to one round of replication. Described as a receptor-destroying enzyme because it cleaves a terminal sialic acid from the cellular receptors. May facilitate viral invasion of the upper airways by cleaving the sialic acid moieties on the mucin of the airway epithelial cells. Likely to plays a role in the budding process through its association with lipid rafts during intracellular transport. May additionally display a raft-association independent effect on budding. Plays a role in the determination of host range restriction on replication and virulence. Sialidase activity in late endosome/lysosome traffic seems to enhance virus replication. The protein is Neuraminidase of Influenza A virus (strain A/Beijing/39/1975 H3N2).